The chain runs to 1145 residues: Cellulose synthase-like protein D3 (1145 aa).

Residues 1–19 show a composition bias toward polar residues; sequence MASNNHFMNSRSNLSTNSD. Disordered stretches follow at residues 1-38 and 189-208; these read MASN…TFAR and DNNK…SKMD. Transmembrane regions (helical) follow at residues 289–309 and 319–339; these read VISP…LFLM and AIWL…SWLL. Asp419 is a catalytic residue. The residue at position 755 (Ser755) is a Phosphoserine. Asp848 is a catalytic residue. Helical transmembrane passes span 930 to 950, 956 to 976, 1002 to 1022, 1045 to 1065, 1079 to 1099, and 1109 to 1129; these read FFLI…QFIV, TFLV…LLEI, LAAV…SFTL, SLMI…AVGF, LIGG…FAKG, and TIVY…WVAI.

Belongs to the glycosyltransferase 2 family. Plant cellulose synthase-like D subfamily. In terms of tissue distribution, preferentially expressed in root hair cells. Expressed in roots, leaves, stems, flowers and siliques.

It is found in the golgi apparatus membrane. Its function is as follows. Thought to be a Golgi-localized beta-glycan synthase that polymerize the backbones of noncellulosic polysaccharides (hemicelluloses) of plant cell wall. Required for synthesis of a cell wall polysaccharide essential for root hair elongation, but not initiation. May be the functional ortholog of rice CSLD1. In Arabidopsis thaliana (Mouse-ear cress), this protein is Cellulose synthase-like protein D3 (CSLD3).